Reading from the N-terminus, the 261-residue chain is CD40 ligand (261 aa).

Topologically, residues 1–22 (MVETYHQPAPRSAATGLPVSMK) are cytoplasmic. The helical; Signal-anchor for type II membrane protein transmembrane segment at 23 to 43 (IFMYLLTVFLITQMIGSALFA) threads the bilayer. At 44-261 (VYLHRRLDKI…GFTSFGLLKL (218 aa)) the chain is on the extracellular side. Residues 122–261 (IAAHVISEAS…GFTSFGLLKL (140 aa)) enclose the THD domain. A disulfide bridge connects residues cysteine 178 and cysteine 218. Residue asparagine 240 is glycosylated (N-linked (GlcNAc...) asparagine).

This sequence belongs to the tumor necrosis factor family. As to quaternary structure, homotrimer. Interacts with CD28. CD40 ligand, soluble form: Exists as either a monomer or a homotrimer. Forms a ternary complex between CD40 and integrins for CD40-CD40LG signaling. In terms of processing, the soluble form derives from the membrane form by proteolytic processing.

Its subcellular location is the cell membrane. The protein resides in the cell surface. The protein localises to the secreted. Its function is as follows. Cytokine that acts as a ligand to CD40/TNFRSF5. Costimulates T-cell proliferation and cytokine production. Its cross-linking on T-cells generates a costimulatory signal which enhances the production of IL4 and IL10 in conjunction with the TCR/CD3 ligation and CD28 costimulation. Induces the activation of NF-kappa-B. Induces the activation of kinases MAPK8 and PAK2 in T-cells. Mediates B-cell proliferation in the absence of co-stimulus as well as IgE production in the presence of IL4. Involved in immunoglobulin class switching. Acts as a ligand for integrins, specifically ITGA5:ITGB1 and ITGAV:ITGB3; both integrins and the CD40 receptor are required for activation of CD40-CD40LG signaling, which have cell-type dependent effects, such as B-cell activation, NF-kappa-B signaling and anti-apoptotic signaling. This is CD40 ligand (CD40LG) from Aotus trivirgatus (Three-striped night monkey).